The sequence spans 785 residues: 5-methyltetrahydropteroyltriglutamate--homocysteine methyltransferase (785 aa).

Residues 15-18 (RELK) and Lys121 each bind 5-methyltetrahydropteroyltri-L-glutamate. L-homocysteine is bound by residues 460–462 (IGS) and Glu513. L-methionine-binding positions include 460–462 (IGS) and Glu513. 5-methyltetrahydropteroyltri-L-glutamate-binding positions include 544–545 (RC) and Trp590. Position 628 (Asp628) interacts with L-homocysteine. Asp628 lines the L-methionine pocket. Glu634 is a binding site for 5-methyltetrahydropteroyltri-L-glutamate. Zn(2+)-binding residues include His670, Cys672, and Glu694. The active-site Proton donor is the His723. Cys755 is a binding site for Zn(2+).

It belongs to the vitamin-B12 independent methionine synthase family. It depends on Zn(2+) as a cofactor.

The enzyme catalyses 5-methyltetrahydropteroyltri-L-glutamate + L-homocysteine = tetrahydropteroyltri-L-glutamate + L-methionine. It functions in the pathway amino-acid biosynthesis; L-methionine biosynthesis via de novo pathway; L-methionine from L-homocysteine (MetE route): step 1/1. Its function is as follows. Catalyzes the transfer of a methyl group from 5-methyltetrahydrofolate to homocysteine resulting in methionine formation. This is 5-methyltetrahydropteroyltriglutamate--homocysteine methyltransferase from Nitratidesulfovibrio vulgaris (strain ATCC 29579 / DSM 644 / CCUG 34227 / NCIMB 8303 / VKM B-1760 / Hildenborough) (Desulfovibrio vulgaris).